A 758-amino-acid polypeptide reads, in one-letter code: 5-methyltetrahydropteroyltriglutamate--homocysteine methyltransferase (758 aa).

5-methyltetrahydropteroyltri-L-glutamate is bound by residues 17 to 20 and Lys-117; that span reads RELK. Residues 434-436 and Glu-487 contribute to the L-homocysteine site; that span reads IGS. L-methionine contacts are provided by residues 434–436 and Glu-487; that span reads IGS. 5-methyltetrahydropteroyltri-L-glutamate is bound by residues 518–519 and Trp-564; that span reads RC. Position 602 (Asp-602) interacts with L-homocysteine. Residue Asp-602 coordinates L-methionine. Glu-608 lines the 5-methyltetrahydropteroyltri-L-glutamate pocket. Zn(2+)-binding residues include His-644, Cys-646, and Glu-668. The active-site Proton donor is the His-697. Zn(2+) is bound at residue Cys-729.

This sequence belongs to the vitamin-B12 independent methionine synthase family. Requires Zn(2+) as cofactor.

The catalysed reaction is 5-methyltetrahydropteroyltri-L-glutamate + L-homocysteine = tetrahydropteroyltri-L-glutamate + L-methionine. It functions in the pathway amino-acid biosynthesis; L-methionine biosynthesis via de novo pathway; L-methionine from L-homocysteine (MetE route): step 1/1. Functionally, catalyzes the transfer of a methyl group from 5-methyltetrahydrofolate to homocysteine resulting in methionine formation. The chain is 5-methyltetrahydropteroyltriglutamate--homocysteine methyltransferase from Sodalis glossinidius (strain morsitans).